The chain runs to 401 residues: Carbamoyl phosphate synthase small chain (401 aa).

The CPSase stretch occupies residues methionine 1–aspartate 203. Positions 56, 255, and 257 each coordinate L-glutamine. Residues histidine 207–glutamate 395 enclose the Glutamine amidotransferase type-1 domain. The active-site Nucleophile is the cysteine 284. Positions 285, 288, 326, 328, and 329 each coordinate L-glutamine. Catalysis depends on residues histidine 368 and glutamate 370.

This sequence belongs to the CarA family. As to quaternary structure, composed of two chains; the small (or glutamine) chain promotes the hydrolysis of glutamine to ammonia, which is used by the large (or ammonia) chain to synthesize carbamoyl phosphate. Tetramer of heterodimers (alpha,beta)4.

The enzyme catalyses hydrogencarbonate + L-glutamine + 2 ATP + H2O = carbamoyl phosphate + L-glutamate + 2 ADP + phosphate + 2 H(+). The catalysed reaction is L-glutamine + H2O = L-glutamate + NH4(+). Its pathway is amino-acid biosynthesis; L-arginine biosynthesis; carbamoyl phosphate from bicarbonate: step 1/1. The protein operates within pyrimidine metabolism; UMP biosynthesis via de novo pathway; (S)-dihydroorotate from bicarbonate: step 1/3. Small subunit of the glutamine-dependent carbamoyl phosphate synthetase (CPSase). CPSase catalyzes the formation of carbamoyl phosphate from the ammonia moiety of glutamine, carbonate, and phosphate donated by ATP, constituting the first step of 2 biosynthetic pathways, one leading to arginine and/or urea and the other to pyrimidine nucleotides. The small subunit (glutamine amidotransferase) binds and cleaves glutamine to supply the large subunit with the substrate ammonia. This is Carbamoyl phosphate synthase small chain from Rhizobium meliloti (strain 1021) (Ensifer meliloti).